A 352-amino-acid polypeptide reads, in one-letter code: Putative conjugal transfer protein MT3759 (352 aa).

160 to 167 provides a ligand contact to ATP; that stretch reads GGTGAGKT.

It belongs to the GSP E family.

The protein localises to the cytoplasm. The polypeptide is Putative conjugal transfer protein MT3759 (Mycobacterium tuberculosis (strain CDC 1551 / Oshkosh)).